The sequence spans 331 residues: Putative T-box protein 36 (331 aa).

The segment at residues 29–210 (EITKKQWNQL…MNRFSRKRKY (182 aa)) is a DNA-binding region (T-box).

It is found in the nucleus. The chain is Putative T-box protein 36 (tbx-36) from Caenorhabditis elegans.